A 479-amino-acid polypeptide reads, in one-letter code: Poly(A) polymerase catalytic subunit (479 aa).

Active-site residues include Asp-202 and Asp-204. Ca(2+)-binding residues include Asp-202, Asp-204, and Asp-253.

The protein belongs to the poxviridae poly(A) polymerase catalytic subunit family. As to quaternary structure, heterodimer of a large (catalytic) subunit and a small (regulatory) subunit.

The enzyme catalyses RNA(n) + ATP = RNA(n)-3'-adenine ribonucleotide + diphosphate. Polymerase that creates the 3'-poly(A) tail of mRNA's. This Homo sapiens (Human) protein is Poly(A) polymerase catalytic subunit (OPG063).